Reading from the N-terminus, the 138-residue chain is UPF0047 protein MJ1081 (138 aa).

Belongs to the UPF0047 family.

This is UPF0047 protein MJ1081 from Methanocaldococcus jannaschii (strain ATCC 43067 / DSM 2661 / JAL-1 / JCM 10045 / NBRC 100440) (Methanococcus jannaschii).